Here is a 342-residue protein sequence, read N- to C-terminus: GTPase Obg (342 aa).

In terms of domain architecture, Obg spans 1 to 159 (MQFIDRAEIE…RHLRLELKLL (159 aa)). The 169-residue stretch at 160 to 328 (AEVGIIGLPN…LLAKVWQQLE (169 aa)) folds into the OBG-type G domain. GTP is bound by residues 166-173 (GLPNAGKS), 191-195 (FTTLI), 213-216 (DIPG), 280-283 (NKID), and 309-311 (SAV). Residues S173 and T193 each contribute to the Mg(2+) site.

This sequence belongs to the TRAFAC class OBG-HflX-like GTPase superfamily. OBG GTPase family. In terms of assembly, monomer. The cofactor is Mg(2+).

It localises to the cytoplasm. In terms of biological role, an essential GTPase which binds GTP, GDP and possibly (p)ppGpp with moderate affinity, with high nucleotide exchange rates and a fairly low GTP hydrolysis rate. Plays a role in control of the cell cycle, stress response, ribosome biogenesis and in those bacteria that undergo differentiation, in morphogenesis control. This is GTPase Obg from Microcystis aeruginosa (strain NIES-843 / IAM M-2473).